Consider the following 347-residue polypeptide: Endothelin receptor type B (347 aa).

Residues 1 to 7 lie on the Extracellular side of the membrane; it reads EIKETFK. Residues 8 to 32 form a helical membrane-spanning segment; that stretch reads YINTVVSCLVFVLGIIGNSTLLRII. The Cytoplasmic portion of the chain corresponds to 33–43; that stretch reads YKNKCMRNGPN. A helical transmembrane segment spans residues 44 to 69; that stretch reads ILIASLALGDLLHIIIDIPISVYKLL. Residues 70 to 81 are Extracellular-facing; the sequence is AEDWPFGVEMCK. C80 and C161 form a disulfide bridge. Residues 82-103 traverse the membrane as a helical segment; sequence LVPFIQKASVGITVLSLCALSI. Topologically, residues 104 to 124 are cytoplasmic; sequence DRYRAVASWSRIKGIGVPKWT. Residues 125-149 form a helical membrane-spanning segment; that stretch reads AVEIVLIWVISVVLAVPEAIAFDMI. Topologically, residues 150 to 177 are extracellular; it reads TMEYRGKDLRICLLHPTQKTSFMMFYKQ. Residues 178–202 traverse the membrane as a helical segment; the sequence is AKDWWLFSFYFCLPLAITALFYTLM. Over 203-230 the chain is Cytoplasmic; sequence TCEMLRKKSGMQIALNDHLKQRREVAKT. The helical transmembrane segment at 231 to 256 threads the bilayer; it reads VFCLVLVFALCWLPLHLSRILKLTIY. At 257–268 the chain is on the extracellular side; that stretch reads DQKDPNRCELLS. Residues 269 to 295 form a helical membrane-spanning segment; sequence FFLVMDYIGINMASLNSCINPIALYLV. Over 296–347 the chain is Cytoplasmic; it reads SKRFQNCFKSCLCCWCQSKDLLSLEERQSCLKFKANDHGYDNFRSSNKYSSS. S-palmitoyl cysteine attachment occurs at residues C309 and C311.

Belongs to the G-protein coupled receptor 1 family. Endothelin receptor subfamily. EDNRB sub-subfamily.

It is found in the cell membrane. In terms of biological role, non-specific receptor for endothelin 1, 2, and 3. Mediates its action by association with G proteins that activate a phosphatidylinositol-calcium second messenger system. The polypeptide is Endothelin receptor type B (EDNRB) (Coturnix japonica (Japanese quail)).